The chain runs to 318 residues: MASPGCLLCVLGLLLCGAASLELSRPHGDTAKKPIIGILMQKCRNKVMKNYGRYYIAASYVKYLESAGARVVPVRLDLTEKDYEILFKSINGILFPGGSVDLRRSDYAKVAKIFYNLSIQSFDDGDYFPVWGTCLGFEELSLLISGECLLTATDTVDVAMPLNFTGGQLHSRMFQNFPTELLLSLAVEPLTANFHKWSLSVKNFTMNEKLKKFFNVLTTNTDGKIEFISTMEGYKYPVYGVQWHPEKAPYEWKNLDGISHAPNAVKTAFYLAEFFVNEARKNNHHFKSESEEEKALIYQFSPIYTGNISSFQQCYIFD.

The signal sequence occupies residues 1–24 (MASPGCLLCVLGLLLCGAASLELS). Residues 25–318 (RPHGDTAKKP…SSFQQCYIFD (294 aa)) enclose the Gamma-glutamyl hydrolase domain. The N-linked (GlcNAc...) asparagine glycan is linked to Asn116. Cys134 (nucleophile) is an active-site residue. N-linked (GlcNAc...) asparagine glycans are attached at residues Asn163 and Asn203. His244 acts as the Proton donor in catalysis. An N-linked (GlcNAc...) asparagine; partial glycan is attached at Asn307.

It belongs to the peptidase C26 family. In terms of assembly, homodimer.

The protein resides in the secreted. It is found in the extracellular space. Its subcellular location is the lysosome. The protein localises to the melanosome. The enzyme catalyses (6S)-5,6,7,8-tetrahydrofolyl-(gamma-L-Glu)(n) + (n-1) H2O = (6S)-5,6,7,8-tetrahydrofolate + (n-1) L-glutamate. In terms of biological role, hydrolyzes the polyglutamate sidechains of pteroylpolyglutamates. Progressively removes gamma-glutamyl residues from pteroylpoly-gamma-glutamate to yield pteroyl-alpha-glutamate (folic acid) and free glutamate. May play an important role in the bioavailability of dietary pteroylpolyglutamates and in the metabolism of pteroylpolyglutamates and antifolates. This Homo sapiens (Human) protein is Gamma-glutamyl hydrolase.